The following is a 223-amino-acid chain: DNA-directed RNA polymerase III subunit RPC7 (223 aa).

Basic and acidic residues predominate over residues 111-124 (MMPRKKCKKGDPKS). Residues 111–223 (MMPRKKCKKG…SDDNMDEATY (113 aa)) form a disordered region. T134 carries the post-translational modification Phosphothreonine. Positions 144–156 (KTIEELEKRGEGE) are enriched in basic and acidic residues. S158 is modified (phosphoserine). 2 stretches are compositionally biased toward acidic residues: residues 173–198 (KDDE…EEND) and 206–223 (NGDD…EATY).

This sequence belongs to the eukaryotic RPC7 RNA polymerase subunit family. Component of the RNA polymerase III complex consisting of 17 subunits: a ten-subunit horseshoe-shaped catalytic core composed of POLR3A/RPC1, POLR3B/RPC2, POLR1C/RPAC1, POLR1D/RPAC2, POLR3K/RPC10, POLR2E/RPABC1, POLR2F/RPABC2, POLR2H/RPABC3, POLR2K/RPABC4 and POLR2L/RPABC5; a mobile stalk composed of two subunits POLR3H/RPC8 and CRCP/RPC9, protruding from the core and functioning primarily in transcription initiation; and additional subunits homologous to general transcription factors of the RNA polymerase II machinery, POLR3C/RPC3-POLR3F/RPC6-POLR3G/RPC7 heterotrimer required for transcription initiation and POLR3D/RPC4-POLR3E/RPC5 heterodimer involved in both transcription initiation and termination. Directly interacts with POLR3C/RPC62. Also found in a trimeric complex with POLR3C/RPC3 and POLR3GL. In terms of tissue distribution, expressed at low levels in the liver.

It is found in the nucleus. The protein localises to the cytoplasm. In terms of biological role, DNA-dependent RNA polymerase catalyzes the transcription of DNA into RNA using the four ribonucleoside triphosphates as substrates. Specific peripheric component of RNA polymerase III (Pol III) which synthesizes small non-coding RNAs including 5S rRNA, snRNAs, tRNAs and miRNAs from at least 500 distinct genomic loci. Acts as a long tether that bridges POLR3C/RPC3-POLR3F/RPC6-POLR3G/RPC7 heterotrimer and the mobile stalk of Pol III, coordinating the dynamics of Pol III stalk and clamp modules during the transition from apo to elongation state. Pol III exists as two alternative complexes defined by the mutually exclusive incorporation of subunit POLR3G/RPC7alpha or POLR3GL/RPC7beta. POLR3G/RPC7alpha modulates Pol III transcriptome by specifically enhancing the transcription of snaR-A non-coding RNAs. At resting state, occupies the active site of apo Pol III and keeps Pol III in an autoinhibitory mode, preventing non-specific transcription. Pol III plays a key role in sensing and limiting infection by intracellular bacteria and DNA viruses. Acts as a nuclear and cytosolic DNA sensor involved in innate immune response. Can sense non-self dsDNA that serves as template for transcription into dsRNA. The non-self RNA polymerase III transcripts, such as Epstein-Barr virus-encoded RNAs (EBERs), induce type I interferon and NF-kappa-B through the RIG-I pathway. In Mus musculus (Mouse), this protein is DNA-directed RNA polymerase III subunit RPC7 (Polr3g).